A 347-amino-acid chain; its full sequence is NADH-ubiquinone oxidoreductase chain 2 (347 aa).

9 helical membrane-spanning segments follow: residues Met1–Met21, Tyr59–Leu79, Thr93–Val115, Ile149–Gly169, Ile178–Pro198, Thr201–Leu221, Ile239–Gly259, Asp274–Met294, and Leu325–Val345.

Belongs to the complex I subunit 2 family. As to quaternary structure, core subunit of respiratory chain NADH dehydrogenase (Complex I) which is composed of 45 different subunits. Interacts with TMEM242.

The protein localises to the mitochondrion inner membrane. The catalysed reaction is a ubiquinone + NADH + 5 H(+)(in) = a ubiquinol + NAD(+) + 4 H(+)(out). Functionally, core subunit of the mitochondrial membrane respiratory chain NADH dehydrogenase (Complex I) which catalyzes electron transfer from NADH through the respiratory chain, using ubiquinone as an electron acceptor. Essential for the catalytic activity and assembly of complex I. In Hippopotamus amphibius (Hippopotamus), this protein is NADH-ubiquinone oxidoreductase chain 2.